The sequence spans 486 residues: Glutamyl-tRNA(Gln) amidotransferase subunit A (486 aa).

Active-site charge relay system residues include Lys-75 and Ser-150. Ser-174 (acyl-ester intermediate) is an active-site residue.

Belongs to the amidase family. GatA subfamily. Heterotrimer of A, B and C subunits.

It carries out the reaction L-glutamyl-tRNA(Gln) + L-glutamine + ATP + H2O = L-glutaminyl-tRNA(Gln) + L-glutamate + ADP + phosphate + H(+). Allows the formation of correctly charged Gln-tRNA(Gln) through the transamidation of misacylated Glu-tRNA(Gln) in organisms which lack glutaminyl-tRNA synthetase. The reaction takes place in the presence of glutamine and ATP through an activated gamma-phospho-Glu-tRNA(Gln). The sequence is that of Glutamyl-tRNA(Gln) amidotransferase subunit A from Trichormus variabilis (strain ATCC 29413 / PCC 7937) (Anabaena variabilis).